The sequence spans 408 residues: Peptidase T (408 aa).

His78 serves as a coordination point for Zn(2+). The active site involves Asp80. Asp140 contacts Zn(2+). Catalysis depends on Glu173, which acts as the Proton acceptor. Residues Glu174, Asp196, and His379 each coordinate Zn(2+).

It belongs to the peptidase M20B family. Zn(2+) serves as cofactor.

It localises to the cytoplasm. It catalyses the reaction Release of the N-terminal residue from a tripeptide.. Its function is as follows. Cleaves the N-terminal amino acid of tripeptides. The chain is Peptidase T from Salmonella arizonae (strain ATCC BAA-731 / CDC346-86 / RSK2980).